We begin with the raw amino-acid sequence, 141 residues long: Hemoglobin subunit alpha (141 aa).

In terms of domain architecture, Globin spans 1-141; that stretch reads VLSSADKANI…VSTVLTSKYR (141 aa). S3 is modified (phosphoserine). N6-succinyllysine occurs at positions 7 and 11. At K16 the chain carries N6-acetyllysine; alternate. K16 is modified (N6-succinyllysine; alternate). At Y24 the chain carries Phosphotyrosine. An N6-succinyllysine modification is found at K40. Residue S49 is modified to Phosphoserine. H58 is a binding site for O2. Position 87 (H87) interacts with heme b. At S102 the chain carries Phosphoserine. Position 108 is a phosphothreonine (T108). S131 bears the Phosphoserine mark. A phosphothreonine mark is found at T134 and T137. S138 is subject to Phosphoserine.

The protein belongs to the globin family. As to quaternary structure, heterotetramer of two alpha chains and two beta chains. Red blood cells.

Its function is as follows. Involved in oxygen transport from the lung to the various peripheral tissues. Hemopressin acts as an antagonist peptide of the cannabinoid receptor CNR1. Hemopressin-binding efficiently blocks cannabinoid receptor CNR1 and subsequent signaling. This is Hemoglobin subunit alpha (HBA) from Crocuta crocuta (Spotted hyena).